Here is a 321-residue protein sequence, read N- to C-terminus: Chlorohydroquinone/hydroquinone 1,2-dioxygenase (321 aa).

VOC domains are found at residues 10–138 and 160–282; these read GLHH…IIEQ and GFHS…ASVT. Fe cation is bound by residues histidine 162, histidine 229, and glutamate 278.

The protein belongs to the extradiol ring-cleavage dioxygenase family. It depends on Fe(2+) as a cofactor.

The catalysed reaction is hydroquinone + O2 = (2E,4Z)-4-hydroxy-6-oxohexa-2,4-dienoate + H(+). It catalyses the reaction chlorohydroquinone + O2 = 5-chlorocarbonyl-4-hydroxy-penta-2,4-dienoate + H(+). The protein operates within xenobiotic degradation; gamma-hexachlorocyclohexane degradation. In terms of biological role, cleaves aromatic rings with two hydroxyl groups at para positions with consumption of O(2). Catalyzes the cleavage of chlorohydroquinone (CHQ), as part of the gamma-hexachlorocyclohexane (gamma-HCH or lindane) degradation pathway, producing 5-chlorocarbonyl-4-hydroxy-penta-2,4-dienoate as an intermediate product that can react with water yielding maleylacetate. This degradation pathway allows S.japonicum UT26 to grow on gamma-HCH as the sole source of carbon and energy. Can also use hydroquinone (HQ) as substrate, leading to gamma-hydroxymuconic semialdehyde. Is not able to convert catechol, contrary to meta-cleavage dioxygenases. In Sphingobium indicum (strain DSM 16413 / CCM 7287 / MTCC 6362 / UT26 / NBRC 101211 / UT26S) (Sphingobium japonicum), this protein is Chlorohydroquinone/hydroquinone 1,2-dioxygenase.